The following is a 628-amino-acid chain: MAGERPPLRGPGPGETPVEGPGGAGGGPGRGRPSSYRALRSAVSSLARVDDFDCAEKIGAGFFSEVYKVRHRQSGQVMVLKMNKLPSNRSNTLREVQLMNRLRHPNILRFMGVCVHQGQLHALTEYMNGGTLEQLLSSPEPLSWPVRLHLALDIAQGLRYLHAKGVFHRDLTSKNCLVRREDGGFTAVVGDFGLAEKIPVYREGARKEPLAVVGSPYWMAPEVLRGELYDEKADVFAFGIVLCELIARVPADPDYLPRTEDFGLDVPAFRTLVGNDCPLPFLLLAIHCCSMEPSARAPFTEITQHLEQILEQLPEPTPLAKMPLAKAPLTYNQGSVPRGGPSATLPRSDPRLSRSRSDLFLPPSPESPPSWGDNLTRVNPFSLREDLRGGKIKLLDTPCKPATPLPLVPPSPLTSTQLPLVASPESLVQPETPVRRCRSLPSSPELPRRMETALPGPGPSPVGPSTEERMDCEGSSPEPEPPGPAPQLPLAVATDNFISTCSSASQPWSARPGPSLNNNPPAVVVNSPQGWAREPWNRAQHSLPRAAALERTEPSPPPSAPREQEEGLPCPGCCLSPFSFGFLSMCPRPTPAVARYRNLNCEAGSLLCHRGHHAKPPTPSLQLPGARS.

A disordered region spans residues 1-35 (MAGERPPLRGPGPGETPVEGPGGAGGGPGRGRPSS). A compositionally biased stretch (gly residues) spans 20–30 (GPGGAGGGPGR). The region spanning 52–310 (FDCAEKIGAG…EITQHLEQIL (259 aa)) is the Protein kinase domain. ATP is bound by residues 58-66 (IGAGFFSEV) and K81. Residue D170 is the Proton acceptor of the active site. S215 is modified (phosphoserine; by autocatalysis). Disordered stretches follow at residues 330-376 (TYNQ…DNLT), 424-490 (PESL…QLPL), and 538-568 (RAQH…EEGL). R338 is subject to Omega-N-methylarginine. Basic and acidic residues predominate over residues 348-357 (SDPRLSRSRS). The segment at 421 to 526 (VASPESLVQP…NNNPPAVVVN (106 aa)) is required for interaction with YWHAB. The residue at position 439 (S439) is a Phosphoserine. Positions 478–487 (EPEPPGPAPQ) are enriched in pro residues. The interval 529–626 (QGWAREPWNR…PTPSLQLPGA (98 aa)) is required for interaction with PARVA. A required for interaction with SPRED1 and SPRY2. Required for TESK1-mediated dephosphorylation of SPRY2 and SPRY2 inhibition of ERK phosphorylation region spans residues 529-628 (QGWAREPWNR…PSLQLPGARS (100 aa)).

This sequence belongs to the protein kinase superfamily. TKL Ser/Thr protein kinase family. As to quaternary structure, interacts (via both C- and N-termini) with SPRY4 (via C-terminus); the interaction inhibits TESK1 kinase activity. Interacts with TAOK1; the interaction inhibits TAOK1 kinase activity. Interacts (via C-terminus) with SPRED1 (via C-terminus); the interaction inhibits TESK1 kinase activity. Interacts (via C-terminus) with PARVA/PARVIN (via C-terminus); the interaction inhibits TESK1 kinase activity. Interacts with YWHAB/14-3-3 beta; the interaction is dependent on the phosphorylation of TESK1 Ser-439 and inhibits TESK1 kinase activity. Interacts with SPRY1, SPRY3 and SPRED2. Interacts (via C-terminus) with SPRY2 (via C-terminus); the interaction disrupts SPRY2 interaction with PPP2CA/PP2A-C, possibly by vesicular sequestration of SPRY2. Therefore dephosphorylation of SPRY2 by the serine/threonine-protein phosphatase 2A (PP2A) holoenzyme is lost, inhibiting its interaction with GRB2. Mg(2+) serves as cofactor. It depends on Mn(2+) as a cofactor. In terms of processing, autophosphorylated on serine and tyrosine residues. In terms of tissue distribution, weakly expressed in sciatic nerves (at protein level). Highly expressed in testicular germ cells. Expressed at low levels in brain, lung, heart, liver and kidney.

The protein resides in the cytoplasm. It is found in the perinuclear region. The protein localises to the cytoskeleton. It localises to the microtubule organizing center. Its subcellular location is the centrosome. The protein resides in the cell projection. It is found in the lamellipodium. It carries out the reaction L-seryl-[protein] + ATP = O-phospho-L-seryl-[protein] + ADP + H(+). The catalysed reaction is L-threonyl-[protein] + ATP = O-phospho-L-threonyl-[protein] + ADP + H(+). It catalyses the reaction L-tyrosyl-[protein] + ATP = O-phospho-L-tyrosyl-[protein] + ADP + H(+). Its activity is regulated as follows. Activated by autophosphorylation on Ser-215. Kinase activity is inhibited by SPRED1. Its function is as follows. Dual specificity protein kinase activity catalyzing autophosphorylation and phosphorylation of exogenous substrates on both serine/threonine and tyrosine residues. Regulates the cellular cytoskeleton by enhancing actin stress fiber formation via phosphorylation of cofilin and by preventing microtubule breakdown via inhibition of TAOK1/MARKK kinase activity. Inhibits podocyte motility via regulation of actin cytoskeletal dynamics and phosphorylation of CFL1. Positively regulates integrin-mediated cell spreading, via phosphorylation of cofilin. Suppresses ciliogenesis via multiple pathways; phosphorylation of CFL1, suppression of ciliary vesicle directional trafficking to the ciliary base, and by facilitating YAP1 nuclear localization where it acts as a transcriptional corepressor of the TEAD4 target genes AURKA and PLK1. Probably plays a central role at and after the meiotic phase of spermatogenesis. The polypeptide is Dual specificity testis-specific protein kinase 1 (Tesk1) (Rattus norvegicus (Rat)).